The primary structure comprises 65 residues: Large ribosomal subunit protein uL29 (65 aa).

This sequence belongs to the universal ribosomal protein uL29 family.

This chain is Large ribosomal subunit protein uL29 (rpmC), found in Xylella fastidiosa (strain 9a5c).